The following is a 716-amino-acid chain: Putative mannosyltransferase YkcB (716 aa).

A run of 8 helical transmembrane segments spans residues 8-28 (LDIV…YNIW), 44-64 (MMQS…FITV), 87-107 (SVIL…YLLI), 118-135 (IASF…VART), 137-157 (NVDA…FKAI), 159-179 (KGKL…FNTK), 180-200 (MLQA…AANA), and 206-226 (IVSL…WPLI). Positions 260–363 (TGQNSGGGQG…GSGMFGTGTP (104 aa)) are disordered. A compositionally biased stretch (polar residues) spans 278–289 (EMSSSDNTQAPP). Residues 290–307 (NQSSSNSSSSDGKSSNGN) are compositionally biased toward low complexity. Residues 318 to 347 (PSGGQGGPPSGGDGGQGGPGGDGGKGGTGT) show a composition bias toward gly residues. A run of 6 helical transmembrane segments spans residues 376 to 396 (QISW…IAGA), 409 to 429 (TVFW…AEFF), 433 to 453 (YLIM…VALV), 462 to 482 (WKAW…LFIL), 491 to 511 (VGWS…LLLF), and 518 to 538 (FSYY…MYWA). A disordered region spans residues 664-716 (VASEKWQSSSDQKTENTDSADTSSSKASGENGKMGGPGGMNQSATLYELHADE). A compositionally biased stretch (low complexity) spans 680-694 (TDSADTSSSKASGEN).

This sequence belongs to the glycosyltransferase 39 family.

It is found in the cell membrane. The protein is Putative mannosyltransferase YkcB (ykcB) of Bacillus subtilis (strain 168).